A 308-amino-acid polypeptide reads, in one-letter code: Phenylcoumaran benzylic ether reductase TP7 (308 aa).

NADP(+) contacts are provided by residues 11–17, Arg-36, and Lys-45; that span reads GGTGYIG. Residue Lys-133 is the Proton acceptor of the active site. Residue Arg-137 coordinates NADP(+).

This sequence belongs to the NmrA-type oxidoreductase family. Isoflavone reductase subfamily. As to expression, expressed in flowers. Expressed at low levels in stems.

It catalyses the reaction (-)-dehydrodiconiferyl alcohol + NADPH + H(+) = (S)-isodihydrodehydrodiconiferyl alcohol + NADP(+). The catalysed reaction is (+)-dehydrodiconiferyl alcohol + NADPH + H(+) = (R)-isodihydrodehydrodiconiferyl alcohol + NADP(+). It carries out the reaction (2R,3S)-dihydrodehydrodiconiferyl alcohol + NADPH + H(+) = (S)-tetrahydrodehydrodiconiferyl alcohol + NADP(+). The enzyme catalyses (2S,3R)-dihydrodehydrodiconiferyl alcohol + NADPH + H(+) = (R)-tetrahydrodehydrodiconiferyl alcohol + NADP(+). In terms of biological role, oxidoreductase involved in lignan biosynthesis. Catalyzes the NADPH-dependent reduction of phenylcoumaran benzylic ethers. Converts dehydrodiconiferyl alcohol (DDC) to isodihydrodehydrodiconiferyl alcohol (IDDDC), and dihydrodehydrodiconiferyl alcohol (DDDC) to tetrahydrodehydrodiconiferyl alcohol (TDDC). The protein is Phenylcoumaran benzylic ether reductase TP7 of Nicotiana tabacum (Common tobacco).